A 286-amino-acid chain; its full sequence is Bifunctional protein FolD (286 aa).

NADP(+) contacts are provided by residues 164–166 (GRS), Ser-193, and Ile-234.

Belongs to the tetrahydrofolate dehydrogenase/cyclohydrolase family. Homodimer.

The catalysed reaction is (6R)-5,10-methylene-5,6,7,8-tetrahydrofolate + NADP(+) = (6R)-5,10-methenyltetrahydrofolate + NADPH. It carries out the reaction (6R)-5,10-methenyltetrahydrofolate + H2O = (6R)-10-formyltetrahydrofolate + H(+). Its pathway is one-carbon metabolism; tetrahydrofolate interconversion. Its function is as follows. Catalyzes the oxidation of 5,10-methylenetetrahydrofolate to 5,10-methenyltetrahydrofolate and then the hydrolysis of 5,10-methenyltetrahydrofolate to 10-formyltetrahydrofolate. The sequence is that of Bifunctional protein FolD from Nitratidesulfovibrio vulgaris (strain ATCC 29579 / DSM 644 / CCUG 34227 / NCIMB 8303 / VKM B-1760 / Hildenborough) (Desulfovibrio vulgaris).